Here is a 226-residue protein sequence, read N- to C-terminus: LexA repressor (226 aa).

The segment at residues 42-62 is a DNA-binding region (H-T-H motif); the sequence is MREIGDAVGLASLSSVTHQLN. Residues serine 150 and lysine 187 each act as for autocatalytic cleavage activity in the active site.

This sequence belongs to the peptidase S24 family. Homodimer.

The catalysed reaction is Hydrolysis of Ala-|-Gly bond in repressor LexA.. In terms of biological role, represses a number of genes involved in the response to DNA damage (SOS response), including recA and lexA. In the presence of single-stranded DNA, RecA interacts with LexA causing an autocatalytic cleavage which disrupts the DNA-binding part of LexA, leading to derepression of the SOS regulon and eventually DNA repair. This Clavibacter sepedonicus (Clavibacter michiganensis subsp. sepedonicus) protein is LexA repressor.